An 823-amino-acid polypeptide reads, in one-letter code: Transcription factor SPT20 homolog-like 1 (823 aa).

Disordered stretches follow at residues 246–273, 369–524, 560–601, 631–669, and 720–757; these read SVKP…KEER, PRKK…AAQP, GSSF…AVQA, VLTG…LGLS, and LRQQ…PQHI. Residues 423-440 are compositionally biased toward polar residues; sequence SHSSSGPASVSQLSSWKT. Low complexity-rich tracts occupy residues 469 to 509, 568 to 582, and 636 to 650; these read SSSG…QKPS, APGS…ISGS, and QQQS…QLQQ.

This sequence belongs to the SPT20 family.

The chain is Transcription factor SPT20 homolog-like 1 (SUPT20HL1) from Homo sapiens (Human).